The sequence spans 179 residues: ATP-dependent protease subunit HslV (179 aa).

Threonine 7 is an active-site residue. Residues glycine 162, cysteine 165, and threonine 168 each coordinate Na(+).

Belongs to the peptidase T1B family. HslV subfamily. In terms of assembly, a double ring-shaped homohexamer of HslV is capped on each side by a ring-shaped HslU homohexamer. The assembly of the HslU/HslV complex is dependent on binding of ATP.

It localises to the cytoplasm. The catalysed reaction is ATP-dependent cleavage of peptide bonds with broad specificity.. Allosterically activated by HslU binding. In terms of biological role, protease subunit of a proteasome-like degradation complex believed to be a general protein degrading machinery. The sequence is that of ATP-dependent protease subunit HslV from Bordetella petrii (strain ATCC BAA-461 / DSM 12804 / CCUG 43448).